A 313-amino-acid polypeptide reads, in one-letter code: MKNYQFSTALLSSQIQGKKLRFPCPAKINLFLYITSQRPDGYHELQTLFQFLNFGDWLSIEIRTDGKIILTSEIPHLKNEDNLIYRAAKLLQQKTGCTLGANLHLDKILPIGGGVGGGSSNAATALVALNYLWNTQLSLSTLAEIGLQLGADVPVFVYGKAAFAEGVGEKLTFCQPPQKWFLVLKPETSISTAIIFKDPNLPRNTPKRPLAELLITKYENDCEKVVLNHYSEVEEALGWLLQYAPARLTGTGACVFAEFANEQAAQSAFLDKPEKYVGFVAQGTNISPLHQMIEYLSQQKQTLCLPNNTNSRG.

Lys27 is a catalytic residue. ATP is bound at residue 110-120; sequence PIGGGVGGGSS. Asp152 is a catalytic residue.

Belongs to the GHMP kinase family. IspE subfamily.

The enzyme catalyses 4-CDP-2-C-methyl-D-erythritol + ATP = 4-CDP-2-C-methyl-D-erythritol 2-phosphate + ADP + H(+). It participates in isoprenoid biosynthesis; isopentenyl diphosphate biosynthesis via DXP pathway; isopentenyl diphosphate from 1-deoxy-D-xylulose 5-phosphate: step 3/6. Functionally, catalyzes the phosphorylation of the position 2 hydroxy group of 4-diphosphocytidyl-2C-methyl-D-erythritol. This chain is 4-diphosphocytidyl-2-C-methyl-D-erythritol kinase, found in Histophilus somni (strain 129Pt) (Haemophilus somnus).